We begin with the raw amino-acid sequence, 324 residues long: Meiotic recombination protein DLH1 (324 aa).

112 to 119 (GEFRCGKT) lines the ATP pocket. Arg214 serves as a coordination point for dsDNA. Arg214, Tyr217, Arg220, Arg226, and Arg296 together coordinate ssDNA. DsDNA contacts are provided by Arg220 and Arg226.

It belongs to the RecA family. DMC1 subfamily. As to quaternary structure, double stacked ring-shaped homooctamer.

It localises to the nucleus. Functionally, required for meiotic recombination, synaptonemal complex formation and cell cycle progression. The polypeptide is Meiotic recombination protein DLH1 (DLH1) (Candida albicans (Yeast)).